The sequence spans 208 residues: Uracil phosphoribosyltransferase (208 aa).

5-phospho-alpha-D-ribose 1-diphosphate contacts are provided by residues arginine 78, arginine 103, and 130-138; that span reads DPMLATGGS. Residues isoleucine 193 and 198 to 200 each bind uracil; that span reads GDA. 5-phospho-alpha-D-ribose 1-diphosphate is bound at residue aspartate 199.

The protein belongs to the UPRTase family. Mg(2+) is required as a cofactor.

The catalysed reaction is UMP + diphosphate = 5-phospho-alpha-D-ribose 1-diphosphate + uracil. Its pathway is pyrimidine metabolism; UMP biosynthesis via salvage pathway; UMP from uracil: step 1/1. Its activity is regulated as follows. Allosterically activated by GTP. Catalyzes the conversion of uracil and 5-phospho-alpha-D-ribose 1-diphosphate (PRPP) to UMP and diphosphate. The sequence is that of Uracil phosphoribosyltransferase from Haemophilus ducreyi (strain 35000HP / ATCC 700724).